Reading from the N-terminus, the 341-residue chain is Tetraacyldisaccharide 4'-kinase (341 aa).

54 to 61 contacts ATP; that stretch reads TVGGAGKT.

Belongs to the LpxK family.

It carries out the reaction a lipid A disaccharide + ATP = a lipid IVA + ADP + H(+). It participates in glycolipid biosynthesis; lipid IV(A) biosynthesis; lipid IV(A) from (3R)-3-hydroxytetradecanoyl-[acyl-carrier-protein] and UDP-N-acetyl-alpha-D-glucosamine: step 6/6. Transfers the gamma-phosphate of ATP to the 4'-position of a tetraacyldisaccharide 1-phosphate intermediate (termed DS-1-P) to form tetraacyldisaccharide 1,4'-bis-phosphate (lipid IVA). This chain is Tetraacyldisaccharide 4'-kinase, found in Brucella melitensis biotype 1 (strain ATCC 23456 / CCUG 17765 / NCTC 10094 / 16M).